The chain runs to 719 residues: Protein psiI (719 aa).

A signal peptide spans 1 to 19 (MKIIFNLLILFSLVNFINS). The Extracellular segment spans residues 20 to 658 (QSTTQATTLK…ICQTGAIVST (639 aa)). Residues N62, N105, N118, N151, N315, N379, N454, N488, N500, N538, N592, and N629 are each glycosylated (N-linked (GlcNAc...) asparagine). The 143-residue stretch at 119–261 (LTLNPSTGTY…YDYCGVCYGD (143 aa)) folds into the PA14 domain. A helical transmembrane segment spans residues 659 to 679 (AVVASVVVVGAVVLGAAIFAG). Topologically, residues 680–719 (KKGYDHWKANQGQVFASSNANPLYQQSNNGGENALFEAPQ) are cytoplasmic.

Belongs to the prespore-cell-inducing factor family.

It localises to the membrane. The protein is Protein psiI (psiI) of Dictyostelium discoideum (Social amoeba).